Reading from the N-terminus, the 644-residue chain is Acetyl-coenzyme A synthetase (644 aa).

CoA-binding positions include 190-193 (RGSK) and Thr-308. Residues 384–386 (GEP), 408–413 (DTWWQT), Asp-497, and Arg-512 contribute to the ATP site. Ser-520 contributes to the CoA binding site. Arg-523 is a binding site for ATP. Mg(2+)-binding residues include Val-534, His-536, and Val-539. Arg-581 contributes to the CoA binding site. Lys-606 carries the post-translational modification N6-acetyllysine.

Belongs to the ATP-dependent AMP-binding enzyme family. Mg(2+) serves as cofactor. Acetylated. Deacetylation by the SIR2-homolog deacetylase activates the enzyme.

It catalyses the reaction acetate + ATP + CoA = acetyl-CoA + AMP + diphosphate. In terms of biological role, catalyzes the conversion of acetate into acetyl-CoA (AcCoA), an essential intermediate at the junction of anabolic and catabolic pathways. AcsA undergoes a two-step reaction. In the first half reaction, AcsA combines acetate with ATP to form acetyl-adenylate (AcAMP) intermediate. In the second half reaction, it can then transfer the acetyl group from AcAMP to the sulfhydryl group of CoA, forming the product AcCoA. The protein is Acetyl-coenzyme A synthetase of Magnetococcus marinus (strain ATCC BAA-1437 / JCM 17883 / MC-1).